Here is a 254-residue protein sequence, read N- to C-terminus: Hydroxyacylglutathione hydrolase (254 aa).

7 residues coordinate Zn(2+): histidine 54, histidine 56, aspartate 58, histidine 59, histidine 111, aspartate 130, and histidine 168.

It belongs to the metallo-beta-lactamase superfamily. Glyoxalase II family. As to quaternary structure, monomer. Zn(2+) is required as a cofactor.

It carries out the reaction an S-(2-hydroxyacyl)glutathione + H2O = a 2-hydroxy carboxylate + glutathione + H(+). The protein operates within secondary metabolite metabolism; methylglyoxal degradation; (R)-lactate from methylglyoxal: step 2/2. Its function is as follows. Thiolesterase that catalyzes the hydrolysis of S-D-lactoyl-glutathione to form glutathione and D-lactic acid. This Legionella pneumophila (strain Lens) protein is Hydroxyacylglutathione hydrolase.